The following is an 818-amino-acid chain: Piwi-like protein (818 aa).

The 120-residue stretch at 220 to 339 (RINRVLNDNS…ITGELCFLCG (120 aa)) folds into the PAZ domain. One can recognise a Piwi domain in the interval 501–800 (KIALVFVPDD…LAELIGKVHK (300 aa)).

The protein belongs to the argonaute family. Piwi subfamily.

The protein is Piwi-like protein (iwi) of Dugesia japonica (Planarian).